The primary structure comprises 34 residues: uncharacterized protein (34 aa).

The segment at 1–34 is disordered; that stretch reads MRLRRLFKQPSTRVLGVTNCPRQQGHQKRREQPD. Positions 25–34 are enriched in basic residues; sequence GHQKRREQPD.

This is an uncharacterized protein from Schizosaccharomyces pombe (strain 972 / ATCC 24843) (Fission yeast).